A 385-amino-acid polypeptide reads, in one-letter code: MEEEFKVTPWEVEGIIDYNKLIEQFGTSPLTDDLLERTARLTKSELPIFFRRKFFFSHRDYDKVLDDYEQGKGFFLYTGRGPSGPMHIGHIIPFFATKWLQEKFDVNLYIQITDDEKFLFKENLTFEDTKYWAYQNILDIIAVGFDPDKTFIFQNSEFTKIYEMAIPIAKKINFSMAKAVFGFTEQSKIGMIFFPAIQAAPTFFEKKRCLIPAAIDQDPYWRLQRDFAESLGYYKTAALHSKFFPPLTGLEGKMSASKPETAIYLTDNPEEAGKKIWKFALTGGQPTLKEQREKGGNPEKCVVFKWLEIFFEPDDKKLMERYYACKNGELLCGECKRYLIQRVQEFLKEHQEKRKKAEKLVEKFKYTGKLAQEQWNKAIPDPLKK.

Positions proline 82–histidine 90 match the 'HIGH' region motif. Positions lysine 253–serine 257 match the 'KMSKS' region motif.

It belongs to the class-I aminoacyl-tRNA synthetase family.

It localises to the cytoplasm. The enzyme catalyses tRNA(Trp) + L-tryptophan + ATP = L-tryptophyl-tRNA(Trp) + AMP + diphosphate + H(+). The chain is Tryptophan--tRNA ligase from Pyrococcus furiosus (strain ATCC 43587 / DSM 3638 / JCM 8422 / Vc1).